The sequence spans 82 residues: Small ribosomal subunit protein bS16 (82 aa).

Belongs to the bacterial ribosomal protein bS16 family.

The polypeptide is Small ribosomal subunit protein bS16 (Vibrio campbellii (strain ATCC BAA-1116)).